Here is a 161-residue protein sequence, read N- to C-terminus: Type II secretion system protein M (161 aa).

Over 1 to 16 (MNELRRRWQVMSQRER) the chain is Cytoplasmic. The chain crosses the membrane as a helical span at residues 17-37 (LMALACGGLVVLCLLYYLIWA). Residues 38-161 (PWQESVRQWQ…VTRLSLERVL (124 aa)) lie on the Periplasmic side of the membrane.

The protein belongs to the GSP M family. In terms of assembly, type II secretion system is composed of four main components: the outer membrane complex, the inner membrane complex, the cytoplasmic secretion ATPase and the periplasm-spanning pseudopilus. Forms homodimers. Interacts with OutL/GspL. Interacts with OutE/GspE and OutF/GspF.

It is found in the cell inner membrane. Functionally, inner membrane component of the type II secretion system required for the energy-dependent secretion of extracellular factors such as proteases and toxins from the periplasm. Plays a role in the complex assembly and recruits OutL resulting in a stable complex in the inner membrane. Provides thus a link between the energy-providing OutE protein in the cytoplasm and the rest of the T2SS machinery. The sequence is that of Type II secretion system protein M (outM) from Dickeya chrysanthemi (Pectobacterium chrysanthemi).